Reading from the N-terminus, the 938-residue chain is Respiratory burst oxidase homolog protein C (938 aa).

The interval 1 to 63 (MQNSENHHPH…DIGTSAGAGA (63 aa)) is disordered. Residues 1 to 369 (MQNSENHHPH…MYFLLDNWQR (369 aa)) lie on the Cytoplasmic side of the membrane. The stretch at 115 to 141 (ASLVRNASSRIRQVSQELKRLASLNKR) forms a coiled coil. 2 EF-hand-like regions span residues 185-195 (TAPTTGLLPRA) and 222-233 (RNITTDSINKAQ). EF-hand domains follow at residues 245-280 (SFDTRLQTFFDMVDKDADGRITEEEVREIIGLSASA) and 289-324 (QSDEYAAMIMEELDPNNLGYIMIENLEMLLLQAPNQ). Asp258, Asp260, Asp262, Arg264, and Glu269 together coordinate Ca(2+). A helical membrane pass occupies residues 370–390 (VWVLLLWIGIMAVLFTWKYIQ). Residues 391-402 (YKQKAAYDVMGP) are Extracellular-facing. Residues 403 to 423 (CVCLAKGAAETIKLNMAIILL) traverse the membrane as a helical segment. In terms of domain architecture, Ferric oxidoreductase spans 408–565 (KGAAETIKLN…LFIIVYTLLI (158 aa)). Over 424–454 (PVCRNTITWLRNKTRLGSAVPFDDNLNFHKV) the chain is Cytoplasmic. A helical transmembrane segment spans residues 455–475 (IAVAIALGVAIHGLAHLTCDF). The Extracellular portion of the chain corresponds to 476–509 (PKLLNASEEAYEPMIYYFGEQPESYWWFVRGVEG). Residues 510–530 (VTGIIMVVLMAIAFTLATPWF) form a helical membrane-spanning segment. Topologically, residues 531-545 (RRGRVSFPKPFHKLT) are cytoplasmic. The helical transmembrane segment at 546–566 (GFNAFWYSHHLFIIVYTLLIV) threads the bilayer. At 567–580 (HGEKLYITKDWYKR) the chain is on the extracellular side. Residues 581–599 (STWMYLTVPLVLYAGERLL) form a helical membrane-spanning segment. One can recognise an FAD-binding FR-type domain in the interval 599–727 (LRAFRSSIKA…DGPYGAPAQD (129 aa)). The Cytoplasmic segment spans residues 600–732 (RAFRSSIKAV…APAQDYKQYE (133 aa)). A helical transmembrane segment spans residues 733–753 (VVLLVGLGIGATPMISIVKDI). The Extracellular portion of the chain corresponds to 754 to 938 (VNNMKAMDEE…TKFDFHKENF (185 aa)). The tract at residues 762 to 796 (EEENSLENGNGMSNAAQNASPNMAQKRGKSSSASG) is disordered. Residues 767–784 (LENGNGMSNAAQNASPNM) are compositionally biased toward polar residues.

This sequence belongs to the RBOH (TC 5.B.1.3) family. As to quaternary structure, monomer and homodimer. Phosphorylated by CPK. In terms of tissue distribution, expressed in leaves.

It is found in the membrane. Functionally, calcium-dependent NADPH oxidase that generates superoxide. May be responsible for the oxidative burst in response to pathogen attack in the leaves. The sequence is that of Respiratory burst oxidase homolog protein C (RBOHC) from Solanum tuberosum (Potato).